We begin with the raw amino-acid sequence, 344 residues long: Isopentenyl-diphosphate delta-isomerase (344 aa).

9 to 10 is a substrate binding site; sequence RK. FMN-binding positions include 65 to 67, Ser95, and Asn124; that span reads AMT. Gln154 lines the substrate pocket. Position 155 (Glu155) interacts with Mg(2+). FMN contacts are provided by residues Lys185, Thr215, 259–261, and 280–281; these read GVR and SG.

This sequence belongs to the IPP isomerase type 2 family. As to quaternary structure, homooctamer. Dimer of tetramers. FMN serves as cofactor. The cofactor is NADPH. It depends on Mg(2+) as a cofactor.

It localises to the cytoplasm. It carries out the reaction isopentenyl diphosphate = dimethylallyl diphosphate. In terms of biological role, involved in the biosynthesis of isoprenoids. Catalyzes the 1,3-allylic rearrangement of the homoallylic substrate isopentenyl (IPP) to its allylic isomer, dimethylallyl diphosphate (DMAPP). The polypeptide is Isopentenyl-diphosphate delta-isomerase (Lacticaseibacillus casei (strain BL23) (Lactobacillus casei)).